A 306-amino-acid polypeptide reads, in one-letter code: Agmatinase (306 aa).

Histidine 126, aspartate 149, histidine 151, aspartate 153, aspartate 230, and aspartate 232 together coordinate Mn(2+).

It belongs to the arginase family. Agmatinase subfamily. The cofactor is Mn(2+).

It carries out the reaction agmatine + H2O = urea + putrescine. It functions in the pathway amine and polyamine biosynthesis; putrescine biosynthesis via agmatine pathway; putrescine from agmatine: step 1/1. Catalyzes the formation of putrescine from agmatine. In Escherichia coli O9:H4 (strain HS), this protein is Agmatinase.